The primary structure comprises 393 residues: Major outer membrane porin, serovar L1 (393 aa).

An N-terminal signal peptide occupies residues 1 to 22 (MKKLLKSVLVFAALSSASSLQA).

This sequence belongs to the chlamydial porin (CP) (TC 1.B.2) family. In terms of assembly, part of a disulfide cross-linked outer membrane complex (COMC) composed of the major outer membrane porin (MOMP), the small cysteine-rich protein (OmcA) and the large cysteine-rich periplasmic protein (OmcB).

The protein resides in the cell outer membrane. Its function is as follows. In elementary bodies (EBs, the infectious stage, which is able to survive outside the host cell) provides the structural integrity of the outer envelope through disulfide cross-links with the small cysteine-rich protein and the large cysteine-rich periplasmic protein. It has been described in publications as the Sarkosyl-insoluble COMC (Chlamydia outer membrane complex), and serves as the functional equivalent of peptidoglycan. Permits diffusion of specific solutes through the outer membrane. The protein is Major outer membrane porin, serovar L1 (ompA) of Chlamydia trachomatis.